Here is an 89-residue protein sequence, read N- to C-terminus: MPVSFYDEIELEDMSYDDEKDVFHYPCPCGDRFEITRQQLKDAEDVARCPSCSLIIRVVFDPIDFEDGDEDEAPVNTIDVASQAVAAAA.

The region spanning 5–61 is the DPH-type MB domain; sequence FYDEIELEDMSYDDEKDVFHYPCPCGDRFEITRQQLKDAEDVARCPSCSLIIRVVFD. Fe cation is bound by residues C27, C29, C49, and C52.

Belongs to the DPH3 family. As to quaternary structure, component of the 2-(3-amino-3-carboxypropyl)histidine synthase complex composed of DPH1, DPH2, DPH3 and a NADH-dependent reductase, predominantly CBR1. Requires Fe(2+) as cofactor.

It is found in the cytoplasm. The protein resides in the nucleus. The enzyme catalyses [3Fe-4S](1+)-[protein] + Fe(2+)-[Dph3] = [3Fe-4S](0)-[protein] + Fe(3+)-[Dph3]. It catalyses the reaction 2 [3Fe-4S](0)-[protein] + 2 Fe(2+)-[Dph3] + NADH = 2 [4Fe-4S](1+)-[protein] + 2 [Dph3] + NAD(+) + H(+). The protein operates within protein modification; peptidyl-diphthamide biosynthesis. In terms of biological role, required for the first step of diphthamide biosynthesis, a post-translational modification of histidine which occurs in elongation factor 2. DPH1 and DPH2 transfer a 3-amino-3-carboxypropyl (ACP) group from S-adenosyl-L-methionine (SAM) to a histidine residue, the reaction is assisted by a reduction system comprising KTI11/DPH3 and a NADH-dependent reductase, predominantly CBR1. Acts as an electron donor to reduce the Fe-S cluster in DPH1-DPH2 keeping the [4Fe-4S] clusters in the active and reduced state. Restores iron to DPH1-DPH2 iron-sulfur clusters which have degraded from [4Fe-4S] to [3Fe-4S] by donating an iron atom to reform [4Fe-4S] clusters, in a manner dependent on the presence of elongation factor 2 and SAM. Associates with the elongator complex and is required for tRNA Wobble base modifications mediated by the elongator complex. The elongator complex is required for multiple tRNA modifications, including mcm5U (5-methoxycarbonylmethyl uridine), mcm5s 2U (5-methoxycarbonylmethyl-2-thiouridine), and ncm5U (5-carbamoylmethyl uridine). This chain is Diphthamide biosynthesis protein 3 (DPH3), found in Mycosarcoma maydis (Corn smut fungus).